Here is a 157-residue protein sequence, read N- to C-terminus: ATP synthase subunit b (157 aa).

Residues 1–21 (MHFLDESFWLAISFIIFVYLI) form a helical membrane-spanning segment.

The protein belongs to the ATPase B chain family. As to quaternary structure, F-type ATPases have 2 components, F(1) - the catalytic core - and F(0) - the membrane proton channel. F(1) has five subunits: alpha(3), beta(3), gamma(1), delta(1), epsilon(1). F(0) has three main subunits: a(1), b(2) and c(10-14). The alpha and beta chains form an alternating ring which encloses part of the gamma chain. F(1) is attached to F(0) by a central stalk formed by the gamma and epsilon chains, while a peripheral stalk is formed by the delta and b chains.

Its subcellular location is the cell inner membrane. Its function is as follows. F(1)F(0) ATP synthase produces ATP from ADP in the presence of a proton or sodium gradient. F-type ATPases consist of two structural domains, F(1) containing the extramembraneous catalytic core and F(0) containing the membrane proton channel, linked together by a central stalk and a peripheral stalk. During catalysis, ATP synthesis in the catalytic domain of F(1) is coupled via a rotary mechanism of the central stalk subunits to proton translocation. Component of the F(0) channel, it forms part of the peripheral stalk, linking F(1) to F(0). The sequence is that of ATP synthase subunit b from Rickettsia bellii (strain RML369-C).